A 216-amino-acid chain; its full sequence is Small ribosomal subunit protein uS5 (216 aa).

One can recognise an S5 DRBM domain in the interval 51–114 (LEEEVIDVNL…DDAKFNIIKV (64 aa)).

The protein belongs to the universal ribosomal protein uS5 family. As to quaternary structure, part of the 30S ribosomal subunit. Contacts protein S4.

With S4 and S12 plays an important role in translational accuracy. This Methanothermobacter thermautotrophicus (strain ATCC 29096 / DSM 1053 / JCM 10044 / NBRC 100330 / Delta H) (Methanobacterium thermoautotrophicum) protein is Small ribosomal subunit protein uS5.